A 661-amino-acid polypeptide reads, in one-letter code: Phospholipid:diacylglycerol acyltransferase (661 aa).

Residues 1-71 (MGTLFRRNVQ…FDRKRDGNGR (71 aa)) form a disordered region. Residues 1–80 (MGTLFRRNVQ…RKRWRDSRRL (80 aa)) are Cytoplasmic-facing. Basic residues predominate over residues 34–48 (HIHHQQGLGHKRRRG). Short sequence motifs (bipartite nuclear localization signal) lie at residues 43–50 (HKRRRGIS) and 64–71 (RKRDGNGR). A compositionally biased stretch (basic and acidic residues) spans 54–70 (KRNERGKDFDRKRDGNG). Residues 81 to 101 (IFILGAFLGVLLPFSFGAYHV) form a helical membrane-spanning segment. Residues 102–661 (HNSDSDLFDN…QWVSQMPFPM (560 aa)) lie on the Lumenal side of the membrane. Q162 serves as a coordination point for substrate. The short motif at 322-326 (GHSMG) is the GHSXG lipase motif element. S324 serves as the catalytic Acyl-ester intermediate. A substrate-binding site is contributed by M325. 3 N-linked (GlcNAc...) asparagine glycosylation sites follow: N453, N461, and N469. The active-site Charge relay system is D567. N-linked (GlcNAc...) asparagine glycosylation is present at N594. H618 functions as the Charge relay system in the catalytic mechanism.

The protein belongs to the AB hydrolase superfamily. Lipase family.

It localises to the endoplasmic reticulum membrane. The protein resides in the nucleus inner membrane. It catalyses the reaction a glycerophospholipid + a 1,2-diacyl-sn-glycerol = a monoacylglycerophospholipid + a triacyl-sn-glycerol. The catalysed reaction is a 1-acyl-sn-glycerol + a 1,2-diacyl-sn-glycero-3-phosphocholine = a 1-acyl-sn-glycero-3-phosphocholine + a 1,2-diacyl-sn-glycerol. It carries out the reaction 1,2-di-(9Z-octadecenoyl)-sn-glycero-3-phosphoethanolamine + 1,2-di-(9Z-octadecenoyl)-sn-glycerol = 1-(9Z-octadecenoyl)-sn-glycero-3-phosphoethanolamine + 1,2,3-tri-(9Z-octadecenoyl)-glycerol. The enzyme catalyses 1,2-di-(9Z-octadecenoyl)-sn-glycerol + 1,2-di-(9Z-octadecenoyl)-sn-glycero-3-phosphocholine = 1,2,3-tri-(9Z-octadecenoyl)-glycerol + 1-(9Z-octadecenoyl)-sn-glycero-3-phosphocholine. It catalyses the reaction 1-(9Z-octadecenoyl)-sn-glycerol + 1,2-di-(9Z-octadecenoyl)-sn-glycero-3-phosphocholine = di-(9Z)-octadecenoylglycerol + 1-(9Z-octadecenoyl)-sn-glycero-3-phosphocholine. The catalysed reaction is 2-(9Z-octadecenoyl)-glycerol + 1,2-di-(9Z-octadecenoyl)-sn-glycero-3-phosphocholine = 1,2-di-(9Z-octadecenoyl)-glycerol + 1-(9Z-octadecenoyl)-sn-glycero-3-phosphocholine. It carries out the reaction 1-(9Z-octadecenoyl)-2-hexadecanoyl-sn-glycero-3-phosphoethanolamine + 1,2-di-(9Z-octadecenoyl)-sn-glycerol = 1,2-di-(9Z)-octadecenoyl-3-hexadecanoyl-sn-glycerol + 1-(9Z-octadecenoyl)-sn-glycero-3-phosphoethanolamine. The enzyme catalyses 1-(9Z-octadecenoyl)-2-octadecanoyl-sn-glycero-3-phosphoethanolamine + 1,2-di-(9Z-octadecenoyl)-sn-glycerol = 1,2-di-(9Z)-octadecenoyl-3-octadecanoyl-sn-glycerol + 1-(9Z-octadecenoyl)-sn-glycero-3-phosphoethanolamine. It catalyses the reaction 1-(9Z)-octadecenoyl-2-(9Z,12Z)-octadecadienoyl-sn-glycero-3-phosphoethanolamine + 1,2-di-(9Z-octadecenoyl)-sn-glycerol = 1,2-di-(9Z)-octadecenoyl-3-(9Z,12Z)-octadecadienoyl-sn-glycerol + 1-(9Z-octadecenoyl)-sn-glycero-3-phosphoethanolamine. In terms of biological role, catalyzes triacylglycerol (TAG) formation by an acyl-CoA independent pathway. The enzyme specifically transfers acyl groups from the sn-2 position of a phospholipid to diacylglycerol (DAG), thus forming an sn-1-lysophospholipid. The preferred acyl donors are phosphatidylethanolamine (PE) and phosphatidylcholine (PC). Also capable of using broad acyl donors such as phosphatidic acid (PA), phosphatidylserine (PS), phosphatidylglycerol (PG) and phosphatidylinositol (PI), as well as monogalactosyldiacylglycerol (MGDG), digalactosyldiacylglycerol (DGDG), and acyl-CoA, and it is more likely to use unsaturated acyl donors. As acyl acceptors, it prefers 1,2- over 1,3-diacylglycerol (DAG). Additionally, has esterification activity that can utilize methanol as acyl acceptor to generate fatty acid methyl esters (FAME). Can also utilize ceramide instead of DAG, acylating the ceramides by attaching a fatty acid to the hydroxy group on the first carbon atom of the long-chain base to produce 1-O-acylceramides. Involved in lipid particle synthesis from the endoplasmic reticulum, promoting localized TAG production at discrete ER subdomains. Relocates from the endoplasmic reticulum to a subdomain of the inner nuclear membrane upon nutrient starvation, where it provides a site of TAG synthesis, which is coupled with nuclear membrane remodeling. The polypeptide is Phospholipid:diacylglycerol acyltransferase (Saccharomyces cerevisiae (strain ATCC 204508 / S288c) (Baker's yeast)).